A 426-amino-acid chain; its full sequence is Gamma-glutamyl phosphate reductase (426 aa).

The protein belongs to the gamma-glutamyl phosphate reductase family.

It is found in the cytoplasm. It carries out the reaction L-glutamate 5-semialdehyde + phosphate + NADP(+) = L-glutamyl 5-phosphate + NADPH + H(+). The protein operates within amino-acid biosynthesis; L-proline biosynthesis; L-glutamate 5-semialdehyde from L-glutamate: step 2/2. Its function is as follows. Catalyzes the NADPH-dependent reduction of L-glutamate 5-phosphate into L-glutamate 5-semialdehyde and phosphate. The product spontaneously undergoes cyclization to form 1-pyrroline-5-carboxylate. This is Gamma-glutamyl phosphate reductase from Cupriavidus taiwanensis (strain DSM 17343 / BCRC 17206 / CCUG 44338 / CIP 107171 / LMG 19424 / R1) (Ralstonia taiwanensis (strain LMG 19424)).